The following is a 435-amino-acid chain: Proline--tRNA ligase (435 aa).

The protein belongs to the class-II aminoacyl-tRNA synthetase family. ProS type 2 subfamily. As to quaternary structure, homodimer.

It localises to the cytoplasm. The catalysed reaction is tRNA(Pro) + L-proline + ATP = L-prolyl-tRNA(Pro) + AMP + diphosphate. Functionally, catalyzes the attachment of proline to tRNA(Pro) in a two-step reaction: proline is first activated by ATP to form Pro-AMP and then transferred to the acceptor end of tRNA(Pro). The protein is Proline--tRNA ligase of Rhodospirillum rubrum (strain ATCC 11170 / ATH 1.1.1 / DSM 467 / LMG 4362 / NCIMB 8255 / S1).